A 371-amino-acid polypeptide reads, in one-letter code: DNA replication and repair protein RecF (371 aa).

30–37 provides a ligand contact to ATP; that stretch reads GANAQGKT.

The protein belongs to the RecF family.

The protein resides in the cytoplasm. Functionally, the RecF protein is involved in DNA metabolism; it is required for DNA replication and normal SOS inducibility. RecF binds preferentially to single-stranded, linear DNA. It also seems to bind ATP. The chain is DNA replication and repair protein RecF from Lacticaseibacillus casei (strain BL23) (Lactobacillus casei).